Consider the following 91-residue polypeptide: Dynein 8 kDa light chain, flagellar outer arm (91 aa).

Belongs to the dynein light chain family. Consists of at least 3 heavy chains (alpha, beta and gamma), 2 intermediate chains and 8 light chains.

The protein resides in the cytoplasm. It localises to the cytoskeleton. Its subcellular location is the flagellum axoneme. The protein is Dynein 8 kDa light chain, flagellar outer arm of Chlamydomonas reinhardtii (Chlamydomonas smithii).